We begin with the raw amino-acid sequence, 256 residues long: Biosynthetic peptidoglycan transglycosylase (256 aa).

A helical membrane pass occupies residues 26–48 (VARWLAYVGGVFAGAWLATQLYY).

It belongs to the glycosyltransferase 51 family.

It localises to the cell inner membrane. It carries out the reaction [GlcNAc-(1-&gt;4)-Mur2Ac(oyl-L-Ala-gamma-D-Glu-L-Lys-D-Ala-D-Ala)](n)-di-trans,octa-cis-undecaprenyl diphosphate + beta-D-GlcNAc-(1-&gt;4)-Mur2Ac(oyl-L-Ala-gamma-D-Glu-L-Lys-D-Ala-D-Ala)-di-trans,octa-cis-undecaprenyl diphosphate = [GlcNAc-(1-&gt;4)-Mur2Ac(oyl-L-Ala-gamma-D-Glu-L-Lys-D-Ala-D-Ala)](n+1)-di-trans,octa-cis-undecaprenyl diphosphate + di-trans,octa-cis-undecaprenyl diphosphate + H(+). It functions in the pathway cell wall biogenesis; peptidoglycan biosynthesis. Peptidoglycan polymerase that catalyzes glycan chain elongation from lipid-linked precursors. In Burkholderia pseudomallei (strain K96243), this protein is Biosynthetic peptidoglycan transglycosylase.